The chain runs to 151 residues: Deoxyuridine 5'-triphosphate nucleotidohydrolase (151 aa).

Residues Arg-70–Gly-72, Asn-83, Leu-87–Asp-89, and Met-97 each bind substrate.

This sequence belongs to the dUTPase family. Mg(2+) is required as a cofactor.

It catalyses the reaction dUTP + H2O = dUMP + diphosphate + H(+). The protein operates within pyrimidine metabolism; dUMP biosynthesis; dUMP from dCTP (dUTP route): step 2/2. Functionally, this enzyme is involved in nucleotide metabolism: it produces dUMP, the immediate precursor of thymidine nucleotides and it decreases the intracellular concentration of dUTP so that uracil cannot be incorporated into DNA. The sequence is that of Deoxyuridine 5'-triphosphate nucleotidohydrolase from Stutzerimonas stutzeri (strain A1501) (Pseudomonas stutzeri).